A 353-amino-acid polypeptide reads, in one-letter code: Phosphate acyltransferase (353 aa).

This sequence belongs to the PlsX family. As to quaternary structure, homodimer. Probably interacts with PlsY.

The protein resides in the cytoplasm. The catalysed reaction is a fatty acyl-[ACP] + phosphate = an acyl phosphate + holo-[ACP]. The protein operates within lipid metabolism; phospholipid metabolism. In terms of biological role, catalyzes the reversible formation of acyl-phosphate (acyl-PO(4)) from acyl-[acyl-carrier-protein] (acyl-ACP). This enzyme utilizes acyl-ACP as fatty acyl donor, but not acyl-CoA. The sequence is that of Phosphate acyltransferase from Ralstonia pickettii (strain 12J).